A 797-amino-acid polypeptide reads, in one-letter code: Striatin-3 (797 aa).

Met1 carries the N-acetylmethionine modification. Composition is skewed to gly residues over residues 1 to 13 and 23 to 43; these read MDEL…GGPG and GPGG…GGGP. The segment at 1–60 is disordered; the sequence is MDELAGGGGGGPGMAAPPRQQQGPGGNLGLSPGGNGAAGGGGPPASEGAGPAAGPELSRP. The span at 44–56 shows a compositional bias: low complexity; the sequence is PASEGAGPAAGPE. The interval 71–79 is caveolin-binding; sequence YIQHEWARF. A coiled-coil region spans residues 77 to 136; the sequence is ARFEMERAHWEVERAELQARIAFLQGERKGQENLKKDLVRRIKMLEYALKQERAKYHKLK. At Thr150 the chain carries Phosphothreonine. Positions 166 to 183 are calmodulin-binding; it reads QNSQLTWKQGRQLLRQYL. A phosphoserine mark is found at Ser202, Ser214, and Ser229. Disordered regions lie at residues 224 to 278 and 313 to 338; these read LNGG…KHRM and DGEG…SPTA. Residues 230 to 241 show a composition bias toward basic and acidic residues; that stretch reads PKQKGQEIKRSS. The span at 253–265 shows a compositional bias: acidic residues; the sequence is NADDSDEDEENDM. Ser257 and Ser335 each carry phosphoserine. WD repeat units lie at residues 478-517, 531-570, 584-623, 679-718, 721-760, and 767-797; these read SHFD…PAKK, AHIG…VDPY, GHTD…PCIC, QSNN…MIHS, AHLD…CVQE, and KLDE…KVFV.

This sequence belongs to the WD repeat striatin family. In terms of assembly, tetramerizes. Part of the core of STRIPAK complexes composed of PP2A catalytic and scaffolding subunits, the striatins (PP2A regulatory subunits), the striatin-associated proteins MOB4, STRIP1 and STRIP2, PDCD10 and members of the STE20 kinases, such as STK24 and STK26. The STRIPAK complex can be extended by adapter proteins such as SLMAP:SIKE1 or CTTNBP2NL. Interacts with CDC42BPB.

It is found in the cytoplasm. The protein resides in the membrane. In terms of biological role, calmodulin-binding scaffolding protein which is the center of the striatin-interacting phosphatase and kinase (STRIPAK) complexes. STRIPAK complexes have critical roles in protein (de)phosphorylation and are regulators of multiple signaling pathways including Hippo, MAPK, nuclear receptor and cytoskeleton remodeling. Different types of STRIPAK complexes are involved in a variety of biological processes such as cell growth, differentiation, apoptosis, metabolism and immune regulation. This Homo sapiens (Human) protein is Striatin-3.